A 299-amino-acid polypeptide reads, in one-letter code: NAD kinase (299 aa).

D64 serves as the catalytic Proton acceptor. Residues 64–65, 138–139, R149, R166, D168, 179–184, and Q238 contribute to the NAD(+) site; these read DG, ND, and TGYAVS.

This sequence belongs to the NAD kinase family. It depends on a divalent metal cation as a cofactor.

It localises to the cytoplasm. The enzyme catalyses NAD(+) + ATP = ADP + NADP(+) + H(+). Functionally, involved in the regulation of the intracellular balance of NAD and NADP, and is a key enzyme in the biosynthesis of NADP. Catalyzes specifically the phosphorylation on 2'-hydroxyl of the adenosine moiety of NAD to yield NADP. In Nitratidesulfovibrio vulgaris (strain ATCC 29579 / DSM 644 / CCUG 34227 / NCIMB 8303 / VKM B-1760 / Hildenborough) (Desulfovibrio vulgaris), this protein is NAD kinase.